Consider the following 234-residue polypeptide: Large ribosomal subunit protein bL25 (234 aa).

A disordered region spans residues 1 to 24 (MATVMELKATARPKSGKGAARAER).

This sequence belongs to the bacterial ribosomal protein bL25 family. CTC subfamily. As to quaternary structure, part of the 50S ribosomal subunit; part of the 5S rRNA/L5/L18/L25 subcomplex. Contacts the 5S rRNA. Binds to the 5S rRNA independently of L5 and L18.

In terms of biological role, this is one of the proteins that binds to the 5S RNA in the ribosome where it forms part of the central protuberance. The polypeptide is Large ribosomal subunit protein bL25 (Rhodopseudomonas palustris (strain BisB5)).